Here is a 418-residue protein sequence, read N- to C-terminus: Probable serine hydroxymethyltransferase (418 aa).

Residues L118 and 122–124 each bind (6S)-5,6,7,8-tetrahydrofolate; that span reads GHL. K226 is modified (N6-(pyridoxal phosphate)lysine). 351–353 provides a ligand contact to (6S)-5,6,7,8-tetrahydrofolate; sequence SPF.

This sequence belongs to the SHMT family. As to quaternary structure, homodimer. The cofactor is pyridoxal 5'-phosphate.

The protein localises to the cytoplasm. It catalyses the reaction (6R)-5,10-methylene-5,6,7,8-tetrahydrofolate + glycine + H2O = (6S)-5,6,7,8-tetrahydrofolate + L-serine. Its pathway is one-carbon metabolism; tetrahydrofolate interconversion. Functionally, catalyzes the reversible interconversion of serine and glycine with tetrahydrofolate (THF) serving as the one-carbon carrier. This reaction serves as the major source of one-carbon groups required for the biosynthesis of purines, thymidylate, methionine, and other important biomolecules. This Mesomycoplasma hyopneumoniae (strain 7448) (Mycoplasma hyopneumoniae) protein is Probable serine hydroxymethyltransferase.